Reading from the N-terminus, the 547-residue chain is MAAKEVKFGDSARKKMLVGVNVLADAVKATLGPKGRNVVLDKSFGAPTITKDGVSVAKEIELKDKFENMGAQLVKDVASKANDAAGDGTTTATVLAQAIVNEGLKAVAAGMNPMDLKRGIDKATVAIVAQLKELAKPCADTKAIAQVGTISANSDESIGQIIAEAMEKVGKEGVITVEEGSGLENELSVVEGMQFDRGYLSPYFVNKPDTMAAELDSPLLLLVDKKISNIREMLPVLEAVAKAGRPLLIVAEDVEGEALATLVVNNMRGIVKVAAVKAPGFGDRRKAMLQDIAILTGGTVISEEVGLSLEGATLEHLGNAKRVVINKENTTIIDGAGVQADIEARVLQIRKQIEETTSDYDREKLQERLAKLAGGVAVIKVGAATEVEMKEKKARVEDALHATRAAVEEGVVPGGGVALVRALQAIEGLKGDNEEQNVGIALLRRAVESPLRQIVANAGDEPSVVVDKVKQGSGNYGFNAATGVYGDMIEMGILDPAKVTRSALQAAASIGGLMITTEAMVAEIVEDKPAMGGMPDMGGMGGMGGMM.

ATP contacts are provided by residues 30-33 (TLGP), lysine 51, 87-91 (DGTTT), glycine 415, 479-481 (NAA), and aspartate 495.

Belongs to the chaperonin (HSP60) family. In terms of assembly, forms a cylinder of 14 subunits composed of two heptameric rings stacked back-to-back. Interacts with the co-chaperonin GroES.

It is found in the cytoplasm. It catalyses the reaction ATP + H2O + a folded polypeptide = ADP + phosphate + an unfolded polypeptide.. Together with its co-chaperonin GroES, plays an essential role in assisting protein folding. The GroEL-GroES system forms a nano-cage that allows encapsulation of the non-native substrate proteins and provides a physical environment optimized to promote and accelerate protein folding. The polypeptide is Chaperonin GroEL (Pseudomonas aeruginosa (strain UCBPP-PA14)).